The following is a 56-amino-acid chain: Large ribosomal subunit protein bL32 (56 aa).

Positions 1-16 (MAVQKSKKSRSRRDMR) are enriched in basic residues. The interval 1–56 (MAVQKSKKSRSRRDMRRSHDAIDGPTLSVDSTTGETHRRHHVTADGYYKGRKVVNK) is disordered.

It belongs to the bacterial ribosomal protein bL32 family.

In Idiomarina loihiensis (strain ATCC BAA-735 / DSM 15497 / L2-TR), this protein is Large ribosomal subunit protein bL32.